The chain runs to 156 residues: 6,7-dimethyl-8-ribityllumazine synthase (156 aa).

5-amino-6-(D-ribitylamino)uracil is bound by residues phenylalanine 24, 56-58 (SFE), and 80-82 (AVV). A (2S)-2-hydroxy-3-oxobutyl phosphate-binding site is contributed by 85 to 86 (ET). The active-site Proton donor is histidine 88. Phenylalanine 113 is a binding site for 5-amino-6-(D-ribitylamino)uracil. Arginine 127 is a (2S)-2-hydroxy-3-oxobutyl phosphate binding site.

It belongs to the DMRL synthase family.

It catalyses the reaction (2S)-2-hydroxy-3-oxobutyl phosphate + 5-amino-6-(D-ribitylamino)uracil = 6,7-dimethyl-8-(1-D-ribityl)lumazine + phosphate + 2 H2O + H(+). It participates in cofactor biosynthesis; riboflavin biosynthesis; riboflavin from 2-hydroxy-3-oxobutyl phosphate and 5-amino-6-(D-ribitylamino)uracil: step 1/2. Functionally, catalyzes the formation of 6,7-dimethyl-8-ribityllumazine by condensation of 5-amino-6-(D-ribitylamino)uracil with 3,4-dihydroxy-2-butanone 4-phosphate. This is the penultimate step in the biosynthesis of riboflavin. In Thermococcus kodakarensis (strain ATCC BAA-918 / JCM 12380 / KOD1) (Pyrococcus kodakaraensis (strain KOD1)), this protein is 6,7-dimethyl-8-ribityllumazine synthase.